Reading from the N-terminus, the 193-residue chain is MYQKENCVEKSMTGAVIYDECNIHGRVETNSTHALFYDDIETNNSRCNNFRNLTNLIKLSLMNVLMTSLESLFFIKNIMKLMMVICLEWKTALLKLLLFQWIVQKIVKQLLKNSTFVQNLKMYIILQTLHKRNPIDLHVQIHCATIVRMKTFKTILILKQQSVLQSMVHLILNFYQQFTIQSLMAQITVWKSQ.

Repression of replication initiation (possible). The polypeptide is Protein D5 (ddpE) (Dictyostelium discoideum (Social amoeba)).